The following is a 473-amino-acid chain: Photosystem II CP43 reaction center protein (473 aa).

Residues 1–14 (MKTLYSLRRFYHVE) constitute a propeptide that is removed on maturation. Thr-15 carries the N-acetylthreonine modification. Thr-15 bears the Phosphothreonine mark. 5 helical membrane passes run 69–93 (LFEVAHFVPEKPMYEQGLILLPHLA), 134–155 (LLGPETLEESFPFFGYVWKDRN), 178–200 (KALYFGGVYDTWAPGGGDVRKIT), 255–275 (KPFAWARRALVWSGEAYLSYS), and 291–312 (CFNNTAYPSEFYGPTGPEASQA). Residue Glu-367 coordinates [CaMn4O5] cluster. The chain crosses the membrane as a helical span at residues 447-471 (RARAAAAGFEKGIDRDFEPVLSMTP).

This sequence belongs to the PsbB/PsbC family. PsbC subfamily. As to quaternary structure, PSII is composed of 1 copy each of membrane proteins PsbA, PsbB, PsbC, PsbD, PsbE, PsbF, PsbH, PsbI, PsbJ, PsbK, PsbL, PsbM, PsbT, PsbX, PsbY, PsbZ, Psb30/Ycf12, at least 3 peripheral proteins of the oxygen-evolving complex and a large number of cofactors. It forms dimeric complexes. The cofactor is Binds multiple chlorophylls and provides some of the ligands for the Ca-4Mn-5O cluster of the oxygen-evolving complex. It may also provide a ligand for a Cl- that is required for oxygen evolution. PSII binds additional chlorophylls, carotenoids and specific lipids..

It is found in the plastid. The protein resides in the chloroplast thylakoid membrane. Its function is as follows. One of the components of the core complex of photosystem II (PSII). It binds chlorophyll and helps catalyze the primary light-induced photochemical processes of PSII. PSII is a light-driven water:plastoquinone oxidoreductase, using light energy to abstract electrons from H(2)O, generating O(2) and a proton gradient subsequently used for ATP formation. In Jasminum nudiflorum (Winter jasmine), this protein is Photosystem II CP43 reaction center protein.